A 225-amino-acid chain; its full sequence is UPF0173 metal-dependent hydrolase PF1764 (225 aa).

Belongs to the UPF0173 family.

This chain is UPF0173 metal-dependent hydrolase PF1764, found in Pyrococcus furiosus (strain ATCC 43587 / DSM 3638 / JCM 8422 / Vc1).